Here is a 934-residue protein sequence, read N- to C-terminus: LPS-assembly protein LptD (934 aa).

A signal peptide spans 1 to 33; it reads MALKSPAFRRKFPLLVTGGLLALQPFATSYVVA. Positions 52 to 86 are disordered; sequence KSPVNNLPPRPVHDGAALTSGTEAPSAEAESADKP.

The protein belongs to the LptD family. As to quaternary structure, component of the lipopolysaccharide transport and assembly complex. Interacts with LptE and LptA.

The protein resides in the cell outer membrane. In terms of biological role, together with LptE, is involved in the assembly of lipopolysaccharide (LPS) at the surface of the outer membrane. The protein is LPS-assembly protein LptD of Pseudomonas putida (strain W619).